Reading from the N-terminus, the 94-residue chain is MGRSLKKGPYCSPKLLARIEEMNEKDQKRVVKTWSRRSTIFPQMIGHTIAVYDGRKHVPVYVTEEMVGHKLGEFAPTRTYRGHGHHTERSTALK.

This sequence belongs to the universal ribosomal protein uS19 family.

In terms of biological role, protein S19 forms a complex with S13 that binds strongly to the 16S ribosomal RNA. In Desulforudis audaxviator (strain MP104C), this protein is Small ribosomal subunit protein uS19.